Here is a 177-residue protein sequence, read N- to C-terminus: Interleukin-25 (177 aa).

Residues 1–32 (MRERPRLGEDSSLISLFLQVVAFLAMVMGTHT) form the signal peptide. Residues 58 to 81 (PVPPLEPARPNRHPESCRASEDGP) are disordered. The span at 69–78 (RHPESCRASE) shows a compositional bias: basic and acidic residues. 2 disulfide bridges follow: Cys110/Cys168 and Cys115/Cys170. A glycan (N-linked (GlcNAc...) asparagine) is linked at Asn136.

The protein belongs to the IL-17 family. As to expression, expressed at low levels in several tissues, including brain, kidney, lung, prostate, testis, spinal cord, adrenal gland, and trachea.

It localises to the secreted. Cytokine produced by various cells such as eosinophils, T-helper type 2 (Th2) cells or epithelial cells that plays a role in internal safety of adaptive immune responses by regulating cytokine production. Promotes and augments T-helper type 2 responses locally or systemically. Exerts its activity via its receptor composed of IL17RA and IL17RB for signal transduction. In turn, stimulates the JAK2-STAT5A pathway and promotes the secretion of type-2 associated cytokines including IL4, IL9 and IL13. Also induces the release of IL8, and IL6 from eosinophils through the combined activation of MAPK and NF-kappa-B pathways. Inhibits the differentiation of T-helper (Th17) cells via the production of IL4, IL5 and IL13. In Homo sapiens (Human), this protein is Interleukin-25 (IL25).